We begin with the raw amino-acid sequence, 156 residues long: Ribosomal RNA large subunit methyltransferase H (156 aa).

S-adenosyl-L-methionine-binding positions include Leu-73, Gly-104, and 123 to 128 (LSAMTL).

This sequence belongs to the RNA methyltransferase RlmH family. In terms of assembly, homodimer.

It localises to the cytoplasm. The catalysed reaction is pseudouridine(1915) in 23S rRNA + S-adenosyl-L-methionine = N(3)-methylpseudouridine(1915) in 23S rRNA + S-adenosyl-L-homocysteine + H(+). Specifically methylates the pseudouridine at position 1915 (m3Psi1915) in 23S rRNA. This is Ribosomal RNA large subunit methyltransferase H from Laribacter hongkongensis (strain HLHK9).